Here is a 293-residue protein sequence, read N- to C-terminus: Acetylglutamate kinase (293 aa).

Substrate contacts are provided by residues 71 to 72 (GG), arginine 93, and asparagine 186.

It belongs to the acetylglutamate kinase family. ArgB subfamily.

Its subcellular location is the cytoplasm. It carries out the reaction N-acetyl-L-glutamate + ATP = N-acetyl-L-glutamyl 5-phosphate + ADP. The protein operates within amino-acid biosynthesis; L-arginine biosynthesis; N(2)-acetyl-L-ornithine from L-glutamate: step 2/4. Its function is as follows. Catalyzes the ATP-dependent phosphorylation of N-acetyl-L-glutamate. The chain is Acetylglutamate kinase from Synechococcus sp. (strain WH7803).